The following is a 279-amino-acid chain: Proteasome subunit beta (279 aa).

The propeptide at Met1–Ala56 is removed in mature form; by autocatalysis. Thr57 (nucleophile) is an active-site residue.

It belongs to the peptidase T1B family. In terms of assembly, the 20S proteasome core is composed of 14 alpha and 14 beta subunits that assemble into four stacked heptameric rings, resulting in a barrel-shaped structure. The two inner rings, each composed of seven catalytic beta subunits, are sandwiched by two outer rings, each composed of seven alpha subunits. The catalytic chamber with the active sites is on the inside of the barrel. Has a gated structure, the ends of the cylinder being occluded by the N-termini of the alpha-subunits. Is capped by the proteasome-associated ATPase, ARC.

It is found in the cytoplasm. The enzyme catalyses Cleavage of peptide bonds with very broad specificity.. It participates in protein degradation; proteasomal Pup-dependent pathway. The formation of the proteasomal ATPase ARC-20S proteasome complex, likely via the docking of the C-termini of ARC into the intersubunit pockets in the alpha-rings, may trigger opening of the gate for substrate entry. Interconversion between the open-gate and close-gate conformations leads to a dynamic regulation of the 20S proteasome proteolysis activity. In terms of biological role, component of the proteasome core, a large protease complex with broad specificity involved in protein degradation. The sequence is that of Proteasome subunit beta from Renibacterium salmoninarum (strain ATCC 33209 / DSM 20767 / JCM 11484 / NBRC 15589 / NCIMB 2235).